Consider the following 46-residue polypeptide: Protein PsbN (46 aa).

Residues 7–27 (ALSVAIGVLAVLFGLTGFGVY) traverse the membrane as a helical segment.

This sequence belongs to the PsbN family.

Its subcellular location is the cellular thylakoid membrane. May play a role in photosystem I and II biogenesis. This is Protein PsbN from Synechococcus sp. (strain CC9605).